The sequence spans 420 residues: Disease resistance protein CHS1 (420 aa).

A TIR domain is found at arginine 12–phenylalanine 167. Glutamate 86 is a catalytic residue. In terms of domain architecture, NB-ARC spans methionine 185–methionine 406.

In terms of tissue distribution, mostly expressed in leaves and flowers (mainly in sepals), and, at a lower intensity, in stems. Present at low levels in roots and seeds.

The protein resides in the cytoplasm. Its subcellular location is the nucleus. The enzyme catalyses NAD(+) + H2O = ADP-D-ribose + nicotinamide + H(+). Functionally, confers resistance to low temperatures by limiting chloroplast damage and cell death, thus maintaining growth homeostasis. Regulates steryl-esters and sterols accumulation. Limits leaf necrosis associated with virulent bacterial infection (e.g. Pseudomonas syringae pv. tomato DC3000). The polypeptide is Disease resistance protein CHS1 (Arabidopsis thaliana (Mouse-ear cress)).